The chain runs to 398 residues: ATP-dependent RNA helicase eIF4A (398 aa).

The Q motif signature appears at 25–53 (DSFDSMDLKPELLRGVYAYGFERPSAIQQ). The region spanning 56–226 (IKPIIAGHDV…TKFMRDPIRI (171 aa)) is the Helicase ATP-binding domain. 69 to 76 (AQSGTGKT) lines the ATP pocket. Positions 174 to 177 (DEAD) match the DEAD box motif. A Helicase C-terminal domain is found at 237–398 (GIKQFYIAVE…EMPMNVADLI (162 aa)).

The protein belongs to the DEAD box helicase family. eIF4A subfamily. As to quaternary structure, component of the eIF4F complex, which composition varies with external and internal environmental conditions. It is composed of at least eIF4A, eIF4E and eIF4G.

It is found in the cytoplasm. It catalyses the reaction ATP + H2O = ADP + phosphate + H(+). In terms of biological role, ATP-dependent RNA helicase which is a subunit of the eIF4F complex involved in cap recognition and is required for mRNA binding to ribosome. In the current model of translation initiation, eIF4A unwinds RNA secondary structures in the 5'-UTR of mRNAs which is necessary to allow efficient binding of the small ribosomal subunit, and subsequent scanning for the initiator codon. This Aspergillus niger (strain ATCC MYA-4892 / CBS 513.88 / FGSC A1513) protein is ATP-dependent RNA helicase eIF4A (tif1).